We begin with the raw amino-acid sequence, 77 residues long: Sec-independent protein translocase protein TatA (77 aa).

Residues Met1 to Gly21 traverse the membrane as a helical segment. The span at Gly42–Glu60 shows a compositional bias: basic and acidic residues. Residues Gly42–Val77 form a disordered region.

This sequence belongs to the TatA/E family. The Tat system comprises two distinct complexes: a TatABC complex, containing multiple copies of TatA, TatB and TatC subunits, and a separate TatA complex, containing only TatA subunits. Substrates initially bind to the TatABC complex, which probably triggers association of the separate TatA complex to form the active translocon.

The protein resides in the cell inner membrane. In terms of biological role, part of the twin-arginine translocation (Tat) system that transports large folded proteins containing a characteristic twin-arginine motif in their signal peptide across membranes. TatA could form the protein-conducting channel of the Tat system. In Bradyrhizobium diazoefficiens (strain JCM 10833 / BCRC 13528 / IAM 13628 / NBRC 14792 / USDA 110), this protein is Sec-independent protein translocase protein TatA.